The sequence spans 476 residues: 3-isopropylmalate dehydratase large subunit (476 aa).

[4Fe-4S] cluster-binding residues include Cys-353, Cys-413, and Cys-416.

The protein belongs to the aconitase/IPM isomerase family. LeuC type 1 subfamily. Heterodimer of LeuC and LeuD. Requires [4Fe-4S] cluster as cofactor.

It catalyses the reaction (2R,3S)-3-isopropylmalate = (2S)-2-isopropylmalate. It participates in amino-acid biosynthesis; L-leucine biosynthesis; L-leucine from 3-methyl-2-oxobutanoate: step 2/4. In terms of biological role, catalyzes the isomerization between 2-isopropylmalate and 3-isopropylmalate, via the formation of 2-isopropylmaleate. This chain is 3-isopropylmalate dehydratase large subunit, found in Photobacterium profundum (strain SS9).